Here is a 158-residue protein sequence, read N- to C-terminus: Transcription elongation factor GreA (158 aa).

Residues 53-75 are a coiled coil; the sequence is AKERQGQVEATIGDLEDKLSRAQ.

This sequence belongs to the GreA/GreB family.

Functionally, necessary for efficient RNA polymerase transcription elongation past template-encoded arresting sites. The arresting sites in DNA have the property of trapping a certain fraction of elongating RNA polymerases that pass through, resulting in locked ternary complexes. Cleavage of the nascent transcript by cleavage factors such as GreA or GreB allows the resumption of elongation from the new 3'terminus. GreA releases sequences of 2 to 3 nucleotides. The chain is Transcription elongation factor GreA from Sphingopyxis alaskensis (strain DSM 13593 / LMG 18877 / RB2256) (Sphingomonas alaskensis).